A 312-amino-acid polypeptide reads, in one-letter code: Serine protease 48 (312 aa).

The signal sequence occupies residues 1–22 (MGPAGLKVLLLLFLGAFQGSFT). One can recognise a Peptidase S1 domain in the interval 40–276 (IVGGQDAALG…YQKWISAIIS (237 aa)). A disulfide bond links Cys-65 and Cys-81. Active-site charge relay system residues include His-80 and Asp-126. Residue Asn-149 is glycosylated (N-linked (GlcNAc...) asparagine). 3 disulfide bridges follow: Cys-160–Cys-235, Cys-190–Cys-214, and Cys-225–Cys-253. The Charge relay system role is filled by Ser-229. An N-linked (GlcNAc...) asparagine glycan is attached at Asn-263.

The protein belongs to the peptidase S1 family.

It localises to the secreted. The protein is Serine protease 48 (Prss48) of Mus musculus (Mouse).